Consider the following 106-residue polypeptide: UPF0145 protein PP_2873 (106 aa).

This sequence belongs to the UPF0145 family.

This Pseudomonas putida (strain ATCC 47054 / DSM 6125 / CFBP 8728 / NCIMB 11950 / KT2440) protein is UPF0145 protein PP_2873.